The primary structure comprises 1726 residues: Transcription elongation factor SPT6 (1726 aa).

Composition is skewed to acidic residues over residues 1–14 (MSDF…ESEE), 32–49 (EEED…DDQD), and 59–80 (NDDD…DSED). Positions 1 to 197 (MSDFVESEAE…DDGQPLKKPK (197 aa)) are disordered. Serine 2 is modified (N-acetylserine). The interval 2–485 (SDFVESEAEE…PKMQNAAKAS (484 aa)) is interaction with IWS1. Residues 2 to 916 (SDFVESEAEE…PPVLRQAVSL (915 aa)) are interaction with PAAF1. The stretch at 3-51 (DFVESEAEESEEEYNHEGEVVPRVTKKFVEEEDDDEEEEEENLDDQDER) forms a coiled coil. Residues serine 7 and serine 12 each carry the phosphoserine modification. 3 positions are modified to phosphoserine: serine 73, serine 78, and serine 91. Over residues 95 to 105 (RLEDDDFDLIE) the composition is skewed to acidic residues. The segment covering 111–122 (KVKRGQKYRRVK) has biased composition (basic residues). Serine 125 is subject to Phosphoserine. Composition is skewed to acidic residues over residues 126-136 (DDDEDDEEEYG), 150-160 (FQDEEGEEGQE), and 169-190 (PDEE…DDDG). Phosphoserine is present on serine 267. The tract at residues 317-1300 (ADWIYRNAFA…NEWKLPKDTY (984 aa)) is interaction with KDM6A. Residues 489-520 (LKRIKEDGDEEGEGEEAEDEEQRGPELKQASR) are disordered. Positions 495-509 (DGDEEGEGEEAEDEE) are enriched in acidic residues. The span at 510–520 (QRGPELKQASR) shows a compositional bias: basic and acidic residues. Lysine 743 carries the post-translational modification N6-acetyllysine. Residues 1213 to 1282 (WNHFDSGSCP…EKFSADLTCR (70 aa)) enclose the S1 motif domain. The region spanning 1325–1431 (YIKRVIAHPS…FARDLLNHKY (107 aa)) is the SH2 domain. Residue tyrosine 1515 is modified to Phosphotyrosine. Position 1523 is a phosphothreonine (threonine 1523). The residue at position 1526 (serine 1526) is a Phosphoserine. A phosphothreonine mark is found at threonine 1530 and threonine 1532. Phosphoserine is present on serine 1535. Threonine 1539 bears the Phosphothreonine mark. An interaction with histone H2B and H3 region spans residues 1633–1726 (PQYHQLQAST…ATPLLDEMDR (94 aa)). Residues 1636–1726 (HQLQASTTPQ…ATPLLDEMDR (91 aa)) form a disordered region. A compositionally biased stretch (low complexity) spans 1639 to 1664 (QASTTPQSTQAQPQPSSSSRQRQQQP). The residue at position 1676 (lysine 1676) is an N6-acetyllysine. Threonine 1697 carries the post-translational modification Phosphothreonine. A phosphoserine mark is found at serine 1701 and serine 1703. 2 positions are modified to phosphothreonine: threonine 1709 and threonine 1718.

This sequence belongs to the SPT6 family. As to quaternary structure, interacts with RNA polymerase II and the DRB sensitivity-inducing factor complex (DSIF complex), which is composed of SUPT5H and SUPT4H1 or SUPT4H2. Interacts with PAAF1. Interacts with histone H2B and H3. Interacts (via SH2 domain) with POLR2A phosphorylated at 'Ser-2'. Interacts (via SH2 domain) with SETD1A. Interacts with IWS1, KDM6A and AICDA. Interacts with WDR43. Dephosphorylated at Ser-1530 by the PNUTS-PP1 complex during RNA polymerase II transcription pause-release. As to expression, ubiquitously expressed.

The protein resides in the nucleus. In terms of biological role, histone H3-H4 chaperone that plays a key role in the regulation of transcription elongation and mRNA processing. Enhances the transcription elongation by RNA polymerase II (RNAPII) and is also required for the efficient activation of transcriptional elongation by the HIV-1 nuclear transcriptional activator, Tat. Besides chaperoning histones in transcription, acts to transport and splice mRNA by forming a complex with IWS1 and the C-terminal domain (CTD) of the RNAPII subunit RPB1 (POLR2A). The SUPT6H:IWS1:CTD complex recruits mRNA export factors (ALYREF/THOC4, EXOSC10) as well as histone modifying enzymes (such as SETD2), to ensure proper mRNA splicing, efficient mRNA export and elongation-coupled H3K36 methylation, a signature chromatin mark of active transcription. SUPT6H via its association with SETD1A, regulates both class-switch recombination and somatic hypermutation through formation of H3K4me3 epigenetic marks on activation-induced cytidine deaminase (AICDA) target loci. Promotes the activation of the myogenic gene program by entailing erasure of the repressive H3K27me3 epigenetic mark through stabilization of the chromatin interaction of the H3K27 demethylase KDM6A. The polypeptide is Transcription elongation factor SPT6 (Supt6h) (Mus musculus (Mouse)).